Here is a 316-residue protein sequence, read N- to C-terminus: ATP synthase gamma chain (316 aa).

This sequence belongs to the ATPase gamma chain family. F-type ATPases have 2 components, CF(1) - the catalytic core - and CF(0) - the membrane proton channel. CF(1) has five subunits: alpha(3), beta(3), gamma(1), delta(1), epsilon(1). CF(0) has three main subunits: a, b and c.

The protein resides in the cellular thylakoid membrane. In terms of biological role, produces ATP from ADP in the presence of a proton gradient across the membrane. The gamma chain is believed to be important in regulating ATPase activity and the flow of protons through the CF(0) complex. This chain is ATP synthase gamma chain, found in Synechococcus elongatus (strain ATCC 33912 / PCC 7942 / FACHB-805) (Anacystis nidulans R2).